Reading from the N-terminus, the 214-residue chain is Large ribosomal subunit protein uL3 (214 aa).

The disordered stretch occupies residues 134-153 (ATHGNSLSHRAPGSIGQNQT). Q152 carries the post-translational modification N5-methylglutamine.

It belongs to the universal ribosomal protein uL3 family. As to quaternary structure, part of the 50S ribosomal subunit. Forms a cluster with proteins L14 and L19. Post-translationally, methylated by PrmB.

Functionally, one of the primary rRNA binding proteins, it binds directly near the 3'-end of the 23S rRNA, where it nucleates assembly of the 50S subunit. The protein is Large ribosomal subunit protein uL3 of Buchnera aphidicola subsp. Baizongia pistaciae (strain Bp).